The chain runs to 275 residues: Penicillin-insensitive murein endopeptidase (275 aa).

A signal peptide spans 1–19; it reads MKNWIVGMVALVTMVPVMA. 3 cysteine pairs are disulfide-bonded: cysteine 44-cysteine 264, cysteine 187-cysteine 235, and cysteine 216-cysteine 223. 5 residues coordinate Zn(2+): histidine 110, histidine 113, aspartate 120, aspartate 147, and histidine 211. Positions 227-262 are disordered; the sequence is DTPPPGDGCGAELESWFQPPPPSAKPGKTLPPPLPP. Pro residues predominate over residues 244–262; it reads QPPPPSAKPGKTLPPPLPP.

Belongs to the peptidase M74 family. As to quaternary structure, dimer. Zn(2+) serves as cofactor.

The protein resides in the periplasm. Functionally, murein endopeptidase that cleaves the D-alanyl-meso-2,6-diamino-pimelyl amide bond that connects peptidoglycan strands. Likely plays a role in the removal of murein from the sacculus. The sequence is that of Penicillin-insensitive murein endopeptidase from Yersinia pestis.